The following is a 311-amino-acid chain: Retinol dehydrogenase 8 (311 aa).

9-18 (LISGCSSGIG) provides a ligand contact to NADP(+). Transmembrane regions (helical) follow at residues 86-106 (VLVNNAGMGLVGPLEGLSLAA), 137-157 (IVVISSVMGLQGVIFNDVYAA), and 169-189 (LAIQLLQFNIFISLVEPGPVV). Position 142 (serine 142) interacts with substrate. The Proton acceptor role is filled by tyrosine 155.

It belongs to the short-chain dehydrogenases/reductases (SDR) family. Detected in photoreceptor outer segments in the retina (at protein level).

The protein resides in the membrane. It carries out the reaction all-trans-retinol + NADP(+) = all-trans-retinal + NADPH + H(+). In terms of biological role, retinol dehydrogenase with a clear preference for NADP. Converts all-trans-retinal to all-trans-retinol. May play a role in the regeneration of visual pigment at high light intensity. The protein is Retinol dehydrogenase 8 (RDH8) of Homo sapiens (Human).